Here is a 201-residue protein sequence, read N- to C-terminus: Dephospho-CoA kinase (201 aa).

A DPCK domain is found at 4–201 (TIGLTGGIAS…ILKQWDALEK (198 aa)). Residue 12-17 (ASGKST) coordinates ATP.

Belongs to the CoaE family.

It is found in the cytoplasm. It carries out the reaction 3'-dephospho-CoA + ATP = ADP + CoA + H(+). Its pathway is cofactor biosynthesis; coenzyme A biosynthesis; CoA from (R)-pantothenate: step 5/5. Its function is as follows. Catalyzes the phosphorylation of the 3'-hydroxyl group of dephosphocoenzyme A to form coenzyme A. This Geobacillus kaustophilus (strain HTA426) protein is Dephospho-CoA kinase.